A 199-amino-acid chain; its full sequence is Venom allergen 5 (199 aa).

Cystine bridges form between cysteine 21-cysteine 87 and cysteine 167-cysteine 184. Residues 38–186 form the SCP domain; sequence LKVHNDERQK…FYKCYLACNY (149 aa). The tract at residues 47 to 67 is disordered; that stretch reads KVKAGQETRGNPGPQPAASNM.

It belongs to the CRISP family. Venom allergen 5-like subfamily. Expressed by the venom gland.

It localises to the secreted. In Brachyponera chinensis (Asian needle ant), this protein is Venom allergen 5.